The chain runs to 365 residues: tRNA/tmRNA (uracil-C(5))-methyltransferase (365 aa).

The S-adenosyl-L-methionine site is built by Q189, Y217, N222, E238, and D298. C323 serves as the catalytic Nucleophile. Residue E357 is the Proton acceptor of the active site.

Belongs to the class I-like SAM-binding methyltransferase superfamily. RNA M5U methyltransferase family. TrmA subfamily.

It carries out the reaction uridine(54) in tRNA + S-adenosyl-L-methionine = 5-methyluridine(54) in tRNA + S-adenosyl-L-homocysteine + H(+). The enzyme catalyses uridine(341) in tmRNA + S-adenosyl-L-methionine = 5-methyluridine(341) in tmRNA + S-adenosyl-L-homocysteine + H(+). Functionally, dual-specificity methyltransferase that catalyzes the formation of 5-methyluridine at position 54 (m5U54) in all tRNAs, and that of position 341 (m5U341) in tmRNA (transfer-mRNA). This chain is tRNA/tmRNA (uracil-C(5))-methyltransferase, found in Shewanella sp. (strain MR-4).